Consider the following 99-residue polypeptide: Putative pterin-4-alpha-carbinolamine dehydratase (99 aa).

Belongs to the pterin-4-alpha-carbinolamine dehydratase family.

It carries out the reaction (4aS,6R)-4a-hydroxy-L-erythro-5,6,7,8-tetrahydrobiopterin = (6R)-L-erythro-6,7-dihydrobiopterin + H2O. This chain is Putative pterin-4-alpha-carbinolamine dehydratase, found in Aquifex aeolicus (strain VF5).